The chain runs to 305 residues: Virulence plasmid integrase pGP7-D (305 aa).

The Core-binding (CB) domain occupies 13–99 (LTFGEASEIW…CYISFTKFLY (87 aa)). The Tyr recombinase domain maps to 127 to 303 (VKTVSISKKE…GNSSVANIPT (177 aa)). Active-site residues include Lys-188 and Arg-257. Tyr-289 functions as the O-(3'-phospho-DNA)-tyrosine intermediate in the catalytic mechanism.

Belongs to the 'phage' integrase family.

The sequence is that of Virulence plasmid integrase pGP7-D from Chlamydia muridarum (strain MoPn / Nigg).